A 78-amino-acid chain; its full sequence is Small integral membrane protein 1 (78 aa).

Residue Met1 is modified to N-acetylmethionine. Residues 1 to 22 form a disordered region; sequence MQSQESGVHYSRWDSSSRDEVS. At 1–48 the chain is on the cytoplasmic side; the sequence is MQSQESGVHYSRWDSSSRDEVSMTAMSSSEEASCYRRISQKLCSGKLG. Phosphoserine occurs at positions 6, 17, 22, and 27. Over residues 11–21 the composition is skewed to basic and acidic residues; sequence SRWDSSSRDEV. The helical; Signal-anchor for type II membrane protein transmembrane segment at 49-69 threads the bilayer; the sequence is IAMKVLGGVALFWIIFILGYI. Over 70–78 the chain is Extracellular; the sequence is TGYYVHKCK.

This sequence belongs to the SMIM1 family. In terms of assembly, homooligomer; disulfide-linked.

Its subcellular location is the cell membrane. Its function is as follows. Regulator of red blood cell formation. The sequence is that of Small integral membrane protein 1 from Mus musculus (Mouse).